The sequence spans 185 residues: Ribosome-recycling factor (185 aa).

Belongs to the RRF family.

The protein resides in the cytoplasm. Functionally, responsible for the release of ribosomes from messenger RNA at the termination of protein biosynthesis. May increase the efficiency of translation by recycling ribosomes from one round of translation to another. This is Ribosome-recycling factor from Carboxydothermus hydrogenoformans (strain ATCC BAA-161 / DSM 6008 / Z-2901).